The primary structure comprises 290 residues: Small ribosomal subunit biogenesis GTPase RsgA (290 aa).

Residues 62 to 213 enclose the CP-type G domain; the sequence is KNSLVRPPIV…IADTPGFSSL (152 aa). GTP contacts are provided by residues 111–114 and 156–164; these read SKLD and GQTGVGKST. 4 residues coordinate Zn(2+): cysteine 237, cysteine 242, histidine 244, and cysteine 250.

The protein belongs to the TRAFAC class YlqF/YawG GTPase family. RsgA subfamily. In terms of assembly, monomer. Associates with 30S ribosomal subunit, binds 16S rRNA. Zn(2+) serves as cofactor.

The protein localises to the cytoplasm. In terms of biological role, one of several proteins that assist in the late maturation steps of the functional core of the 30S ribosomal subunit. Helps release RbfA from mature subunits. May play a role in the assembly of ribosomal proteins into the subunit. Circularly permuted GTPase that catalyzes slow GTP hydrolysis, GTPase activity is stimulated by the 30S ribosomal subunit. This is Small ribosomal subunit biogenesis GTPase RsgA from Streptococcus agalactiae serotype III (strain NEM316).